A 120-amino-acid polypeptide reads, in one-letter code: Large ribosomal subunit protein bL19 (120 aa).

Belongs to the bacterial ribosomal protein bL19 family.

In terms of biological role, this protein is located at the 30S-50S ribosomal subunit interface and may play a role in the structure and function of the aminoacyl-tRNA binding site. This Picosynechococcus sp. (strain ATCC 27264 / PCC 7002 / PR-6) (Agmenellum quadruplicatum) protein is Large ribosomal subunit protein bL19.